We begin with the raw amino-acid sequence, 290 residues long: ATP synthase gamma chain (290 aa).

This sequence belongs to the ATPase gamma chain family. As to quaternary structure, F-type ATPases have 2 components, CF(1) - the catalytic core - and CF(0) - the membrane proton channel. CF(1) has five subunits: alpha(3), beta(3), gamma(1), delta(1), epsilon(1). CF(0) has three main subunits: a, b and c.

Its subcellular location is the cell membrane. Produces ATP from ADP in the presence of a proton gradient across the membrane. The gamma chain is believed to be important in regulating ATPase activity and the flow of protons through the CF(0) complex. This Listeria welshimeri serovar 6b (strain ATCC 35897 / DSM 20650 / CCUG 15529 / CIP 8149 / NCTC 11857 / SLCC 5334 / V8) protein is ATP synthase gamma chain.